The chain runs to 357 residues: DNA replication and repair protein RecF (357 aa).

Position 30–37 (30–37 (GANGSGKT)) interacts with ATP.

The protein belongs to the RecF family.

The protein localises to the cytoplasm. Functionally, the RecF protein is involved in DNA metabolism; it is required for DNA replication and normal SOS inducibility. RecF binds preferentially to single-stranded, linear DNA. It also seems to bind ATP. The sequence is that of DNA replication and repair protein RecF from Escherichia coli O7:K1 (strain IAI39 / ExPEC).